Here is a 620-residue protein sequence, read N- to C-terminus: Dihydroxy-acid dehydratase (620 aa).

Asp82 lines the Mg(2+) pocket. Cys123 serves as a coordination point for [2Fe-2S] cluster. Asp124 and Lys125 together coordinate Mg(2+). Lys125 is modified (N6-carboxylysine). Cys197 serves as a coordination point for [2Fe-2S] cluster. Residue Glu493 coordinates Mg(2+). Ser519 acts as the Proton acceptor in catalysis.

This sequence belongs to the IlvD/Edd family. As to quaternary structure, homodimer. Requires [2Fe-2S] cluster as cofactor. The cofactor is Mg(2+).

The catalysed reaction is (2R)-2,3-dihydroxy-3-methylbutanoate = 3-methyl-2-oxobutanoate + H2O. The enzyme catalyses (2R,3R)-2,3-dihydroxy-3-methylpentanoate = (S)-3-methyl-2-oxopentanoate + H2O. The protein operates within amino-acid biosynthesis; L-isoleucine biosynthesis; L-isoleucine from 2-oxobutanoate: step 3/4. It functions in the pathway amino-acid biosynthesis; L-valine biosynthesis; L-valine from pyruvate: step 3/4. In terms of biological role, functions in the biosynthesis of branched-chain amino acids. Catalyzes the dehydration of (2R,3R)-2,3-dihydroxy-3-methylpentanoate (2,3-dihydroxy-3-methylvalerate) into 2-oxo-3-methylpentanoate (2-oxo-3-methylvalerate) and of (2R)-2,3-dihydroxy-3-methylbutanoate (2,3-dihydroxyisovalerate) into 2-oxo-3-methylbutanoate (2-oxoisovalerate), the penultimate precursor to L-isoleucine and L-valine, respectively. The sequence is that of Dihydroxy-acid dehydratase from Bifidobacterium longum (strain NCC 2705).